The following is a 303-amino-acid chain: Mycothiol acetyltransferase (303 aa).

Asp-33 lines the 1D-myo-inositol 2-(L-cysteinylamino)-2-deoxy-alpha-D-glucopyranoside pocket. Acetyl-CoA-binding positions include 78-80 (VVV) and 86-91 (RRGTGS). Positions 150-303 (VRFATYSGPH…AYAAVAPTDV (154 aa)) constitute an N-acetyltransferase domain. Positions 177, 218, and 226 each coordinate 1D-myo-inositol 2-(L-cysteinylamino)-2-deoxy-alpha-D-glucopyranoside. Residue 230–232 (VGV) coordinates acetyl-CoA. Tyr-269 is a binding site for 1D-myo-inositol 2-(L-cysteinylamino)-2-deoxy-alpha-D-glucopyranoside. Position 274 to 279 (274 to 279 (NTAAVK)) interacts with acetyl-CoA.

Belongs to the acetyltransferase family. MshD subfamily. As to quaternary structure, monomer.

The catalysed reaction is 1D-myo-inositol 2-(L-cysteinylamino)-2-deoxy-alpha-D-glucopyranoside + acetyl-CoA = mycothiol + CoA + H(+). Catalyzes the transfer of acetyl from acetyl-CoA to desacetylmycothiol (Cys-GlcN-Ins) to form mycothiol. This is Mycothiol acetyltransferase from Mycolicibacterium gilvum (strain PYR-GCK) (Mycobacterium gilvum (strain PYR-GCK)).